The following is a 139-amino-acid chain: Large ribosomal subunit protein uL16 (139 aa).

The span at 1-17 (MLIPRRTKHRKQHHPRR) shows a compositional bias: basic residues. Positions 1–24 (MLIPRRTKHRKQHHPRRTGAASGG) are disordered.

The protein belongs to the universal ribosomal protein uL16 family. As to quaternary structure, part of the 50S ribosomal subunit.

Its function is as follows. Binds 23S rRNA and is also seen to make contacts with the A and possibly P site tRNAs. The protein is Large ribosomal subunit protein uL16 of Beutenbergia cavernae (strain ATCC BAA-8 / DSM 12333 / CCUG 43141 / JCM 11478 / NBRC 16432 / NCIMB 13614 / HKI 0122).